A 531-amino-acid polypeptide reads, in one-letter code: Inactive beta-amylase 4, chloroplastic (531 aa).

A chloroplast-targeting transit peptide spans Met-1 to Arg-62.

This sequence belongs to the glycosyl hydrolase 14 family. In terms of tissue distribution, preferentially expressed in vascular tissue of cotyledons, leaves, petioles, stems, petals, siliques and roots, particularly in phloem. Also present in root tip.

The protein localises to the plastid. The protein resides in the chloroplast. In terms of biological role, no alpha-1,4-glucan hydrolase activity, including beta-amylase, alpha-amylase, a-glucosidase or alpha-amyloglucosidase. However, facilitates or regulates starch breakdown, especially at night, by a mechanism involving direct interaction with starch or other alpha-1,4-glucan. The polypeptide is Inactive beta-amylase 4, chloroplastic (BAM4) (Arabidopsis thaliana (Mouse-ear cress)).